The chain runs to 241 residues: Small ribosomal subunit protein uS2 (241 aa).

The protein belongs to the universal ribosomal protein uS2 family.

This is Small ribosomal subunit protein uS2 from Shigella flexneri serotype 5b (strain 8401).